The sequence spans 314 residues: Olfactory receptor 4Q2 (314 aa).

The Extracellular portion of the chain corresponds to 1–26; it reads MDKNQTEVMREFFLSGFSQTPSIEAG. A glycan (N-linked (GlcNAc...) asparagine) is linked at Asn4. Residues 27 to 47 form a helical membrane-spanning segment; it reads LFVLFLFFYMSIWVGNVLIMV. Residues 48-61 are Cytoplasmic-facing; the sequence is TVASDKYLNSSPMY. Residues 62–84 form a helical membrane-spanning segment; that stretch reads FLLGNLSFLDLCYSTVTTPKLLA. At 85–98 the chain is on the extracellular side; it reads DFFNHEKLISYDQC. A disulfide bridge connects residues Cys98 and Cys181. A helical transmembrane segment spans residues 99 to 119; that stretch reads IVQLFFLHFVGAAEMFLLTVM. Residues 120–142 lie on the Cytoplasmic side of the membrane; sequence AYDRYVAICRPLHYTTVMSRGLC. Residues 143–163 traverse the membrane as a helical segment; sequence CVLVAASWMGGFVHSTVQTIL. Residues 164–196 are Extracellular-facing; that stretch reads TVHLPFCGPNQVENTFFCDVPPVIKLACADTFV. Residues 197–217 traverse the membrane as a helical segment; that stretch reads IELLMVSNSGLISTISFVVLI. At 218–236 the chain is on the cytoplasmic side; sequence SSYTTILVKIRSKEGRRKA. Residues 237-257 form a helical membrane-spanning segment; the sequence is LSTCASHLMVVTLFFGPCIFI. Over 258 to 268 the chain is Extracellular; sequence YARPFSTFSVD. Residues 269–289 form a helical membrane-spanning segment; it reads KMVSVLYNVITPMLNPLIYTL. The Cytoplasmic segment spans residues 290–314; that stretch reads RNKEVKSAMQKLWVRNGLTWKKQET.

This sequence belongs to the G-protein coupled receptor 1 family.

It localises to the cell membrane. Functionally, odorant receptor. The sequence is that of Olfactory receptor 4Q2 (OR4Q2) from Homo sapiens (Human).